The primary structure comprises 373 residues: Dual-specificity RNA methyltransferase RlmN (373 aa).

Glutamate 94 functions as the Proton acceptor in the catalytic mechanism. One can recognise a Radical SAM core domain in the interval glutamate 100 to aspartate 339. Cysteine 107 and cysteine 344 are joined by a disulfide. [4Fe-4S] cluster is bound by residues cysteine 114, cysteine 118, and cysteine 121. S-adenosyl-L-methionine contacts are provided by residues glycine 168–glutamate 169, serine 200, serine 222–histidine 224, and asparagine 301. Residue cysteine 344 is the S-methylcysteine intermediate of the active site.

This sequence belongs to the radical SAM superfamily. RlmN family. The cofactor is [4Fe-4S] cluster.

The protein localises to the cytoplasm. It catalyses the reaction adenosine(2503) in 23S rRNA + 2 reduced [2Fe-2S]-[ferredoxin] + 2 S-adenosyl-L-methionine = 2-methyladenosine(2503) in 23S rRNA + 5'-deoxyadenosine + L-methionine + 2 oxidized [2Fe-2S]-[ferredoxin] + S-adenosyl-L-homocysteine. It carries out the reaction adenosine(37) in tRNA + 2 reduced [2Fe-2S]-[ferredoxin] + 2 S-adenosyl-L-methionine = 2-methyladenosine(37) in tRNA + 5'-deoxyadenosine + L-methionine + 2 oxidized [2Fe-2S]-[ferredoxin] + S-adenosyl-L-homocysteine. Specifically methylates position 2 of adenine 2503 in 23S rRNA and position 2 of adenine 37 in tRNAs. m2A2503 modification seems to play a crucial role in the proofreading step occurring at the peptidyl transferase center and thus would serve to optimize ribosomal fidelity. This Shewanella pealeana (strain ATCC 700345 / ANG-SQ1) protein is Dual-specificity RNA methyltransferase RlmN.